Reading from the N-terminus, the 548-residue chain is Sesquiterpene synthase 12 (548 aa).

Residues Asp-299, Asp-303, Asp-444, and Glu-452 each coordinate Mg(2+). Positions 299 to 303 (DDTFD) match the DDXXD motif motif.

It belongs to the terpene synthase family. Tpsa subfamily. Requires Mg(2+) as cofactor. The cofactor is Mn(2+). Mostly expressed in leaves, to a lower extent in stems, trichomes, flowers and roots and, at low levels, in fruits.

It catalyses the reaction (2E,6E)-farnesyl diphosphate = alpha-humulene + diphosphate. It carries out the reaction (2E,6E)-farnesyl diphosphate = (-)-(E)-beta-caryophyllene + diphosphate. The enzyme catalyses (2Z,6Z)-farnesyl diphosphate = beta-bisabolene + diphosphate. The catalysed reaction is (2E)-geranyl diphosphate = terpinolene + diphosphate. It catalyses the reaction (2E)-geranyl diphosphate = limonene + diphosphate. It carries out the reaction (2E)-geranyl diphosphate = beta-myrcene + diphosphate. The enzyme catalyses (2E)-geranyl diphosphate = (E)-beta-ocimene + diphosphate. The catalysed reaction is (2Z,6Z)-farnesyl diphosphate = gamma-curcumene + diphosphate. It catalyses the reaction (2Z,6Z)-farnesyl diphosphate = (Z)-gamma-bisabolene + diphosphate. It participates in secondary metabolite biosynthesis; terpenoid biosynthesis. Its function is as follows. Sesquiterpene synthase involved in the biosynthesis of volatile compounds. Mediates the conversion of (2E,6E)-farnesyl diphosphate (FPP) into (1E,4E,8E)-alpha-humulene and (-)-(E)-beta-caryophyllene, and of (2Z,6Z)-farnesyl diphosphate ((ZZ)-FPP) into beta-bisabolene, gamma-curcumene and (Z)-gamma-bisabolene. Can act with a low efficiency as a monoterpene synthase with geranyl diphosphate (GPP) as substrate, thus producing beta-myrcene, (E)-beta-ocimene, limonene and terpinolene. In Solanum lycopersicum (Tomato), this protein is Sesquiterpene synthase 12.